A 542-amino-acid polypeptide reads, in one-letter code: Chaperonin GroEL (542 aa).

Residues 29–32 (TLGP), 86–90 (DGTTT), G413, 476–478 (NAA), and D492 contribute to the ATP site.

Belongs to the chaperonin (HSP60) family. Forms a cylinder of 14 subunits composed of two heptameric rings stacked back-to-back. Interacts with the co-chaperonin GroES.

The protein resides in the cytoplasm. It catalyses the reaction ATP + H2O + a folded polypeptide = ADP + phosphate + an unfolded polypeptide.. In terms of biological role, together with its co-chaperonin GroES, plays an essential role in assisting protein folding. The GroEL-GroES system forms a nano-cage that allows encapsulation of the non-native substrate proteins and provides a physical environment optimized to promote and accelerate protein folding. This Lactococcus lactis subsp. cremoris (strain MG1363) protein is Chaperonin GroEL.